Consider the following 204-residue polypeptide: Putative F-box protein L168 (204 aa).

Residues 1–46 (MNLCDLFDEIIIGIIDELSDRDKIKFMTTCSRFYYFIDKTKYFDIY) form the F-box domain. Positions 161–184 (NETNKITNNHTNKKINNNKKHQNN) are disordered. Residues 171 to 183 (TNKKINNNKKHQN) show a composition bias toward basic residues.

The sequence is that of Putative F-box protein L168 from Acanthamoeba polyphaga (Amoeba).